A 246-amino-acid chain; its full sequence is Polyhedrin (246 aa).

Belongs to the polyhedrin family.

Its function is as follows. Major component of the virus occlusion bodies, which are large proteinaceous structures (polyhedra), that protect the virus from the outside environment for extended periods until they are ingested by insect larvae. The sequence is that of Polyhedrin (PH) from Lepidoptera (butterflies and moths).